Consider the following 298-residue polypeptide: Thymidylate synthase (298 aa).

DUMP-binding positions include R25 and 159-160; that span reads RR. C179 acts as the Nucleophile in catalysis. DUMP contacts are provided by residues 200–203, N211, and 241–243; these read RSVD and HLY. Residue D203 coordinates (6R)-5,10-methylene-5,6,7,8-tetrahydrofolate. A297 is a binding site for (6R)-5,10-methylene-5,6,7,8-tetrahydrofolate.

It belongs to the thymidylate synthase family. Bacterial-type ThyA subfamily. As to quaternary structure, homodimer.

The protein resides in the cytoplasm. The enzyme catalyses dUMP + (6R)-5,10-methylene-5,6,7,8-tetrahydrofolate = 7,8-dihydrofolate + dTMP. Its pathway is pyrimidine metabolism; dTTP biosynthesis. Its function is as follows. Catalyzes the reductive methylation of 2'-deoxyuridine-5'-monophosphate (dUMP) to 2'-deoxythymidine-5'-monophosphate (dTMP) while utilizing 5,10-methylenetetrahydrofolate (mTHF) as the methyl donor and reductant in the reaction, yielding dihydrofolate (DHF) as a by-product. This enzymatic reaction provides an intracellular de novo source of dTMP, an essential precursor for DNA biosynthesis. This chain is Thymidylate synthase, found in Cereibacter sphaeroides (strain ATCC 17023 / DSM 158 / JCM 6121 / CCUG 31486 / LMG 2827 / NBRC 12203 / NCIMB 8253 / ATH 2.4.1.) (Rhodobacter sphaeroides).